The sequence spans 159 residues: Cytochrome c-type biogenesis protein CcmE (159 aa).

Residues 1-8 (MNPRRKTR) lie on the Cytoplasmic side of the membrane. The chain crosses the membrane as a helical; Signal-anchor for type II membrane protein span at residues 9-29 (LWVALTVLAGLGLTMALVLYA). At 30-159 (LRANIDLFYT…PPQAYKDNRP (130 aa)) the chain is on the periplasmic side. The heme site is built by His130 and Tyr134. Positions 130–159 (HDENYTPPEVKAAMDANHTRPPQAYKDNRP) are disordered.

This sequence belongs to the CcmE/CycJ family.

It is found in the cell inner membrane. Functionally, heme chaperone required for the biogenesis of c-type cytochromes. Transiently binds heme delivered by CcmC and transfers the heme to apo-cytochromes in a process facilitated by CcmF and CcmH. The sequence is that of Cytochrome c-type biogenesis protein CcmE from Cronobacter sakazakii (strain ATCC BAA-894) (Enterobacter sakazakii).